Reading from the N-terminus, the 158-residue chain is Cyclic pyranopterin monophosphate synthase (158 aa).

Substrate is bound by residues 75–77 (LCH) and 113–114 (ME). Aspartate 128 is an active-site residue.

Belongs to the MoaC family. In terms of assembly, homohexamer; trimer of dimers.

The enzyme catalyses (8S)-3',8-cyclo-7,8-dihydroguanosine 5'-triphosphate = cyclic pyranopterin phosphate + diphosphate. It participates in cofactor biosynthesis; molybdopterin biosynthesis. Catalyzes the conversion of (8S)-3',8-cyclo-7,8-dihydroguanosine 5'-triphosphate to cyclic pyranopterin monophosphate (cPMP). In Roseiflexus sp. (strain RS-1), this protein is Cyclic pyranopterin monophosphate synthase.